A 293-amino-acid polypeptide reads, in one-letter code: Probable xyloglucan endotransglucosylase/hydrolase protein 7 (293 aa).

Positions 1 to 29 are cleaved as a signal peptide; sequence MVVSLFSSRNVFYTLSLCLFAALYQPVMS. The 194-residue stretch at 30–223 folds into the GH16 domain; that stretch reads RPAKFEDDFR…WSRAPFYAYY (194 aa). The active-site Nucleophile is Glu109. The Proton donor role is filled by Glu113. Residue Glu113 participates in xyloglucan binding. N-linked (GlcNAc...) asparagine glycosylation is present at Asn117. Residues 126–128, 136–138, 202–203, and Gly207 each bind xyloglucan; these read QTN, DRE, and DW. Residue Asn213 is glycosylated (N-linked (GlcNAc...) asparagine). 2 disulfides stabilise this stretch: Cys231/Cys239 and Cys276/Cys289. Residue Arg281 coordinates xyloglucan.

This sequence belongs to the glycosyl hydrolase 16 family. XTH group 1 subfamily. Post-translationally, contains at least one intrachain disulfide bond essential for its enzymatic activity.

It localises to the secreted. It is found in the cell wall. The protein resides in the extracellular space. Its subcellular location is the apoplast. The catalysed reaction is breaks a beta-(1-&gt;4) bond in the backbone of a xyloglucan and transfers the xyloglucanyl segment on to O-4 of the non-reducing terminal glucose residue of an acceptor, which can be a xyloglucan or an oligosaccharide of xyloglucan.. Its function is as follows. Catalyzes xyloglucan endohydrolysis (XEH) and/or endotransglycosylation (XET). Cleaves and religates xyloglucan polymers, an essential constituent of the primary cell wall, and thereby participates in cell wall construction of growing tissues. In Arabidopsis thaliana (Mouse-ear cress), this protein is Probable xyloglucan endotransglucosylase/hydrolase protein 7 (XTH7).